A 390-amino-acid polypeptide reads, in one-letter code: Ureide permease 1 (390 aa).

At 1–9 the chain is on the extracellular side; it reads MYMIESKGG. The chain crosses the membrane as a helical span at residues 10-30; the sequence is AIACMLLALLFLGTWPAIMTL. At 31 to 44 the chain is on the cytoplasmic side; sequence TERRGRLPQHTYLD. The helical transmembrane segment at 45-65 threads the bilayer; the sequence is YTLTNLLAAVIIALTLGEIGP. The Extracellular portion of the chain corresponds to 66 to 78; the sequence is SRPNFFTQLSQDN. A helical transmembrane segment spans residues 79–99; sequence WQSVMFAMAGGIVLSLGNLAT. Residues 100 to 101 are Cytoplasmic-facing; sequence QY. A helical transmembrane segment spans residues 102–122; sequence AWAYVGLSVTEVITASITVVI. Topologically, residues 123–136 are extracellular; the sequence is GTTLNYFLDDRINR. Residues 137–157 traverse the membrane as a helical segment; the sequence is AEVLFPGVACFLIAVCFGSAV. Topologically, residues 158–221 are cytoplasmic; the sequence is HKSNAADNKT…RAIKVFGKST (64 aa). ATP is bound at residue 213 to 220; sequence AIKVFGKS. The helical transmembrane segment at 222–242 threads the bilayer; the sequence is IIGLVITFFAGICFSLFSPAF. The Extracellular portion of the chain corresponds to 243–261; that stretch reads NLATNDQWHTLKHGVPKLN. A helical membrane pass occupies residues 262–282; the sequence is VYTAFFYFSISAFVVALILNI. Over 283–307 the chain is Cytoplasmic; that stretch reads RFLYWPILGLPRSSFKAYLNDWNGR. Residues 308–328 form a helical membrane-spanning segment; the sequence is GWSFLAGFLCGFGNGLQFMGG. Residues 329–333 are Extracellular-facing; sequence QAAGY. The helical transmembrane segment at 334–354 threads the bilayer; the sequence is AAADAVQALPLVSTFWGILLF. At 355–363 the chain is on the cytoplasmic side; the sequence is GEYRRSSRK. A helical membrane pass occupies residues 364–384; the sequence is TYTLLISMLLMFIVAVAVLMA. Residues 385 to 390 lie on the Extracellular side of the membrane; the sequence is SSGHRK.

The protein belongs to the plant ureide permease (TC 2.A.7.19) family. Expressed in leaves, flowers, roots and stems.

Its subcellular location is the membrane. Functionally, proton-coupled transporter that transports a wide spectrum of oxo derivatives of heterocyclic nitrogen compounds, including allantoin, uric acid and xanthine, but not adenine. Mediates high affinity transport of uracil and 5-fluorouracil (a toxic uracil analog). Mediates transport of free pyrimidines and may function during early seedling development in salvage pathways, by the utilization of pyrimidines from seed storage tissue. The sequence is that of Ureide permease 1 from Arabidopsis thaliana (Mouse-ear cress).